The primary structure comprises 603 residues: Proline--tRNA ligase (603 aa).

The protein belongs to the class-II aminoacyl-tRNA synthetase family. ProS type 1 subfamily. In terms of assembly, homodimer.

Its subcellular location is the cytoplasm. The enzyme catalyses tRNA(Pro) + L-proline + ATP = L-prolyl-tRNA(Pro) + AMP + diphosphate. In terms of biological role, catalyzes the attachment of proline to tRNA(Pro) in a two-step reaction: proline is first activated by ATP to form Pro-AMP and then transferred to the acceptor end of tRNA(Pro). As ProRS can inadvertently accommodate and process non-cognate amino acids such as alanine and cysteine, to avoid such errors it has two additional distinct editing activities against alanine. One activity is designated as 'pretransfer' editing and involves the tRNA(Pro)-independent hydrolysis of activated Ala-AMP. The other activity is designated 'posttransfer' editing and involves deacylation of mischarged Ala-tRNA(Pro). The misacylated Cys-tRNA(Pro) is not edited by ProRS. In Synechocystis sp. (strain ATCC 27184 / PCC 6803 / Kazusa), this protein is Proline--tRNA ligase.